Consider the following 87-residue polypeptide: Pyocin-S1 immunity protein (87 aa).

Belongs to the colicins ColE2/ColE8/ColE9 and pyocins S1/S2 family.

The chain is Pyocin-S1 immunity protein (imm1) from Pseudomonas aeruginosa.